The sequence spans 480 residues: Amino acid permease 5 (480 aa).

The segment at 1–25 (MVVQNVQDLDVLPKHSSDSFDDDGR) is disordered. Over 1–31 (MVVQNVQDLDVLPKHSSDSFDDDGRPKRTGT) the chain is Cytoplasmic. Basic and acidic residues predominate over residues 11–25 (VLPKHSSDSFDDDGR). A run of 2 helical transmembrane segments spans residues 32–52 (VWTASAHIITAVIGSGVLSLA) and 53–73 (WAVAQIGWIGGPVAMLLFSFV). The Cytoplasmic segment spans residues 74–120 (TFYTSTLLCSCYRSGDSVTGKRNYTYMDAIHSNLGGIKVKVCGVVQY). Residues 121–141 (VNLFGTAIGYTIASAISLVAI) traverse the membrane as a helical segment. Over 142–157 (QRTSCQQMNGPNDPCH) the chain is Extracellular. Residues 158–178 (VNGNVYMIAFGIVQIIFSQIP) form a helical membrane-spanning segment. Residues 179–182 (DFDQ) are Cytoplasmic-facing. The chain crosses the membrane as a helical span at residues 183 to 203 (LWWLSIVAAVMSFAYSAIGLG). The Extracellular segment spans residues 204-241 (LGVSKVVENKEIKGSLTGVTVGTVTLSGTVTSSQKIWR). Residues 242-262 (TFQSLGNIAFAYSYSMILIEI) form a helical membrane-spanning segment. The Cytoplasmic segment spans residues 263 to 280 (QDTVKSPPAEVNTMRKAT). Residues 281–301 (FVSVAVTTVFYMLCGCVGYAA) form a helical membrane-spanning segment. Topologically, residues 302-328 (FGDNAPGNLLAHGGFRNPYWLLDIANL) are extracellular. The helical transmembrane segment at 329–349 (AIVIHLVGAYQVYCQPLFAFV) threads the bilayer. At 350-383 (EKEASRRFPESEFVTKEIKIQLFPGKPFNLNLFR) the chain is on the cytoplasmic side. The chain crosses the membrane as a helical span at residues 384-404 (LVWRTFFVMTTTLISMLMPFF). The Extracellular segment spans residues 405–406 (ND). The helical transmembrane segment at 407 to 427 (VVGLLGAIGFWPLTVYFPVEM) threads the bilayer. Over 428–445 (YIAQKNVPRWGTKWVCLQ) the chain is Cytoplasmic. A helical membrane pass occupies residues 446-466 (VLSVTCLFVSVAAAAGSVIGI). Over 467–480 (VSDLKVYKPFQSEF) the chain is Extracellular.

The protein belongs to the amino acid/polyamine transporter 2 family. Amino acid/auxin permease (AAAP) (TC 2.A.18.2) subfamily. As to expression, expressed in leaves, stems, roots, siliques and flowers.

It localises to the cell membrane. Its activity is regulated as follows. Inhibited by 2,4-dinitrophenol. Its function is as follows. Amino acid-proton symporter. Stereospecific transporter with a broad specificity for glutamate and both neutral and basic amino acids. Reduced affinities for asparagine and valine. High affinity transport of the cationic amino acids arginine and lysine, but not of histidine. The sequence is that of Amino acid permease 5 (AAP5) from Arabidopsis thaliana (Mouse-ear cress).